Consider the following 134-residue polypeptide: DNA-directed RNA polymerase subunit omega (134 aa).

Residues 77–108 (IDEPEPDPASLLAAGGNASASGDEEEDAPEAV) are disordered. Over residues 85-97 (ASLLAAGGNASAS) the composition is skewed to low complexity.

Belongs to the RNA polymerase subunit omega family. As to quaternary structure, the RNAP catalytic core consists of 2 alpha, 1 beta, 1 beta' and 1 omega subunit. When a sigma factor is associated with the core the holoenzyme is formed, which can initiate transcription.

It catalyses the reaction RNA(n) + a ribonucleoside 5'-triphosphate = RNA(n+1) + diphosphate. Its function is as follows. Promotes RNA polymerase assembly. Latches the N- and C-terminal regions of the beta' subunit thereby facilitating its interaction with the beta and alpha subunits. The chain is DNA-directed RNA polymerase subunit omega from Rhizobium rhizogenes (strain K84 / ATCC BAA-868) (Agrobacterium radiobacter).